We begin with the raw amino-acid sequence, 412 residues long: uncharacterized protein (412 aa).

It belongs to the PQQ oxidoreductase GdhB family. It depends on pyrroloquinoline quinone as a cofactor.

This is an uncharacterized protein from Synechocystis sp. (strain ATCC 27184 / PCC 6803 / Kazusa).